Reading from the N-terminus, the 452-residue chain is uncharacterized protein (452 aa).

7 helical membrane passes run 18 to 38 (PIIESDLEVIVIALGGYVLAK), 81 to 101 (LLPVFYVIISAASILISFLLA), 269 to 289 (IVLLLDFFSPPLYSLFIALFI), 317 to 337 (AGQVAVPMILVVLGASLATDI), 354 to 374 (VIIVCLLGRMVVVPLALLPAF), 390 to 410 (VFVVVIFLLVGSPTAIQLTQI), and 428 to 448 (SYAVFTPPNSLLLAFASLLVV).

It belongs to the auxin efflux carrier (TC 2.A.69) family.

Its subcellular location is the membrane. This is an uncharacterized protein from Schizosaccharomyces pombe (strain 972 / ATCC 24843) (Fission yeast).